We begin with the raw amino-acid sequence, 262 residues long: GTP cyclohydrolase FolE2 (262 aa).

Belongs to the GTP cyclohydrolase IV family.

It carries out the reaction GTP + H2O = 7,8-dihydroneopterin 3'-triphosphate + formate + H(+). Its pathway is cofactor biosynthesis; 7,8-dihydroneopterin triphosphate biosynthesis; 7,8-dihydroneopterin triphosphate from GTP: step 1/1. Functionally, converts GTP to 7,8-dihydroneopterin triphosphate. The protein is GTP cyclohydrolase FolE2 of Dichelobacter nodosus (strain VCS1703A).